The primary structure comprises 400 residues: Homoserine O-acetyltransferase (400 aa).

One can recognise an AB hydrolase-1 domain in the interval 64-374 (NAILVCHALT…DKGHDAFLLD (311 aa)). Catalysis depends on Ser-169, which acts as the Nucleophile. Arg-239 is a substrate binding site. Residues Asp-335 and His-368 contribute to the active site. Asp-369 contacts substrate.

The protein belongs to the AB hydrolase superfamily. MetX family. In terms of assembly, homodimer.

The protein localises to the cytoplasm. It carries out the reaction L-homoserine + acetyl-CoA = O-acetyl-L-homoserine + CoA. The protein operates within amino-acid biosynthesis; L-methionine biosynthesis via de novo pathway; O-acetyl-L-homoserine from L-homoserine: step 1/1. In terms of biological role, transfers an acetyl group from acetyl-CoA to L-homoserine, forming acetyl-L-homoserine. This is Homoserine O-acetyltransferase from Rhodopseudomonas palustris (strain ATCC BAA-98 / CGA009).